Consider the following 1777-residue polypeptide: Fatty acid synthase subunit alpha (1777 aa).

The disordered stretch occupies residues 101-124 (APVESADNEPAQPAASSTPAAPAP). Residues 110 to 120 (PAQPAASSTPA) are compositionally biased toward low complexity. Positions 151–237 (LSAIDVVISI…KVMGGHIDRL (87 aa)) constitute a Carrier domain. An O-(pantetheine 4'-phosphoryl)serine modification is found at serine 186. Residues 563–803 (FTGRRVLVTG…ILSLLSGDIL (241 aa)) are ketoreductase (KR) domain. A Ketosynthase family 3 (KS3) domain is found at 1007–1539 (KEIMHEVVID…QKGGLVVGIA (533 aa)). Catalysis depends on for beta-ketoacyl synthase activity residues cysteine 1193, histidine 1424, and histidine 1465. Aspartate 1661 lines the Mg(2+) pocket. Acetyl-CoA-binding positions include 1661–1663 (DIE), 1706–1716 (EAIFKSLQIPS), 1730–1734 (SNGAQ), and 1760–1762 (ITH).

This sequence belongs to the thiolase-like superfamily. Fungal fatty acid synthetase subunit alpha family. As to quaternary structure, fatty acid synthase is composed of alpha and beta subunits.

The enzyme catalyses acetyl-CoA + n malonyl-CoA + 2n NADPH + 4n H(+) = a long-chain-acyl-CoA + n CoA + n CO2 + 2n NADP(+).. The catalysed reaction is a fatty acyl-[ACP] + malonyl-[ACP] + H(+) = a 3-oxoacyl-[ACP] + holo-[ACP] + CO2. It carries out the reaction a (3R)-hydroxyacyl-[ACP] + NADP(+) = a 3-oxoacyl-[ACP] + NADPH + H(+). It functions in the pathway secondary metabolite biosynthesis. Fatty acid synthase alpha subunit; part of the gene cluster that mediates the biosynthesis of oryzines, natural products with an unusual maleidride backbone. The two subunits of the fungal fatty acid synthase oryfasA and oryfasB probably form octenoic acid. This fatty acid is most likely activated by the acyl-CoA ligase oryP to give octenyl-CoA before the citrate synthase-like protein oryE catalyzes condensation with oxaloacetate to form tricarboxylic acid. The next steps of the pathways are conjectural, but a favorite possible route has been proposed, beginning with decarboxylation and concomitant dehydration by the decarboxylase oryM, followed by tautomerization, which may lead to the production of a diene intermediate. Reduction of this diene intermediate could give the known metabolite piliformic acid. On the pathway to oryzine B and oryzine A, however, hydroxylation of the diene by the alpha-ketoglutarate-dependent dioxygenase oryG and lactonisation by the lactonohydrolases oryH or oryL could give oryzine B directly. Finally, enoyl reduction by the dehydrogenase oryD would then convert oryzine B into oryzine A. The protein is Fatty acid synthase subunit alpha of Aspergillus oryzae (strain ATCC 42149 / RIB 40) (Yellow koji mold).